We begin with the raw amino-acid sequence, 227 residues long: Cytidylate kinase (227 aa).

7–15 (GPSGAGKGT) contributes to the ATP binding site.

This sequence belongs to the cytidylate kinase family. Type 1 subfamily.

Its subcellular location is the cytoplasm. It carries out the reaction CMP + ATP = CDP + ADP. The enzyme catalyses dCMP + ATP = dCDP + ADP. The chain is Cytidylate kinase from Actinobacillus succinogenes (strain ATCC 55618 / DSM 22257 / CCUG 43843 / 130Z).